Here is a 215-residue protein sequence, read N- to C-terminus: uncharacterized protein (215 aa).

A disordered region spans residues 25 to 48 (LKSASPGPAPASQQASSFGSAPAQ). The segment covering 27 to 47 (SASPGPAPASQQASSFGSAPA) has biased composition (low complexity).

This is an uncharacterized protein from Homo sapiens (Human).